Consider the following 639-residue polypeptide: MLLRKRYRHRPCRLQFLLLLLMLGCVLMMVAMLHPPHHTLHQTVTAQASKHSPEARYRLDFGESQDWVLEAEDEGEEYSPLEGLPPFISLREDQLLVAVALPQARRNQSQGRRGGSYRLIKQPRRQDKEAPKRDWGADEDGEVSEEEELTPFSLDPRGLQEALSARIPLQRALPEVRHPLCLQQHPQDSLPTASVILCFHDEAWSTLLRTVHSILDTVPRAFLKEIILVDDLSQQGQLKSALSEYVARLEGVKLLRSNKRLGAIRARMLGATRATGDVLVFMDAHCECHPGWLEPLLSRIAGDRSRVVSPVIDVIDWKTFQYYPSKDLQRGVLDWKLDFHWEPLPEHVRKALQSPISPIRSPVVPGEVVAMDRHYFQNTGAYDSLMSLRGGENLELSFKAWLCGGSVEILPCSRVGHIYQNQDSHSPLDQEATLRNRVRIAETWLGSFKETFYKHSPEAFSLSKAEKPDCMERLQLQRRLGCRTFHWFLANVYPELYPSEPRPSFSGKLHNTGLGLCADCQAEGDILGCPMVLAPCSDSRQQQYLQHTSRKEIHFGSPQHLCFAVRQEQVILQNCTEEGLAIHQQHWDFQENGMIVHILSGKCMEAVVQENNKDLYLRPCDGKARQQWRFDQINAVDER.

The Cytoplasmic segment spans residues 1–11 (MLLRKRYRHRP). The helical; Signal-anchor for type II membrane protein transmembrane segment at 12–34 (CRLQFLLLLLMLGCVLMMVAMLH) threads the bilayer. Over 35–639 (PPHHTLHQTV…FDQINAVDER (605 aa)) the chain is Lumenal. The segment at 106–155 (RNQSQGRRGGSYRLIKQPRRQDKEAPKRDWGADEDGEVSEEEELTPFSLD) is disordered. N-linked (GlcNAc...) asparagine glycosylation occurs at Asn-107. A compositionally biased stretch (basic and acidic residues) spans 124 to 136 (RRQDKEAPKRDWG). Residues 137–149 (ADEDGEVSEEEEL) are compositionally biased toward acidic residues. Disulfide bonds link Cys-181/Cys-412, Cys-403/Cys-482, Cys-517/Cys-536, Cys-562/Cys-575, and Cys-603/Cys-620. The catalytic subdomain A stretch occupies residues 190-299 (LPTASVILCF…PGWLEPLLSR (110 aa)). Residues Asp-231 and Arg-260 each contribute to the substrate site. The Mn(2+) site is built by Asp-283, His-285, and His-417. Positions 358-420 (PIRSPVVPGE…PCSRVGHIYQ (63 aa)) are catalytic subdomain B. Positions 504 to 631 (SFSGKLHNTG…GKARQQWRFD (128 aa)) constitute a Ricin B-type lectin domain. An N-linked (GlcNAc...) asparagine glycan is attached at Asn-574.

Belongs to the glycosyltransferase 2 family. GalNAc-T subfamily. Mn(2+) serves as cofactor. Widely expressed. Highly expressed in small intestine, placenta, spleen, cerebral cortex and ovary. Expressed at intermediate level in uterus, mammary gland, stomach, cerebellum and whole brain. Weakly expressed in fetal brain, bone marrow, thyroid gland, thymus, heart, skeletal muscle, lung, liver, colon, pancreas, kidney and testis. Not expressed in leukocyte. Expressed in both normal and osteoarthritic cartilage. Expressed at low level in chondrocytes in all zones of both normal and osteoarthritic cartilage.

It is found in the golgi apparatus membrane. It carries out the reaction L-seryl-[protein] + UDP-N-acetyl-alpha-D-galactosamine = a 3-O-[N-acetyl-alpha-D-galactosaminyl]-L-seryl-[protein] + UDP + H(+). The catalysed reaction is L-threonyl-[protein] + UDP-N-acetyl-alpha-D-galactosamine = a 3-O-[N-acetyl-alpha-D-galactosaminyl]-L-threonyl-[protein] + UDP + H(+). Its pathway is protein modification; protein glycosylation. Functionally, catalyzes the initial reaction in O-linked oligosaccharide biosynthesis, the transfer of an N-acetyl-D-galactosamine residue to a serine or threonine residue on the protein receptor. Although it displays a much weaker activity toward all substrates tested compared to GALNT2, it is able to transfer up to seven GalNAc residues to the Muc5AC peptide, suggesting that it can fill vicinal Thr/Ser residues in cooperation with other GALNT proteins. Prefers Muc1a as substrate. This Homo sapiens (Human) protein is Polypeptide N-acetylgalactosaminyltransferase 15 (GALNT15).